The primary structure comprises 72 residues: Translation initiation factor IF-1 (72 aa).

In terms of domain architecture, S1-like spans 1 to 72 (MSKEEAIEVE…TRGRITYRAK (72 aa)).

Belongs to the IF-1 family. In terms of assembly, component of the 30S ribosomal translation pre-initiation complex which assembles on the 30S ribosome in the order IF-2 and IF-3, IF-1 and N-formylmethionyl-tRNA(fMet); mRNA recruitment can occur at any time during PIC assembly.

The protein resides in the cytoplasm. In terms of biological role, one of the essential components for the initiation of protein synthesis. Stabilizes the binding of IF-2 and IF-3 on the 30S subunit to which N-formylmethionyl-tRNA(fMet) subsequently binds. Helps modulate mRNA selection, yielding the 30S pre-initiation complex (PIC). Upon addition of the 50S ribosomal subunit IF-1, IF-2 and IF-3 are released leaving the mature 70S translation initiation complex. The sequence is that of Translation initiation factor IF-1 from Geotalea uraniireducens (strain Rf4) (Geobacter uraniireducens).